The chain runs to 227 residues: CDP-diacylglycerol--glycerol-3-phosphate 3-phosphatidyltransferase (227 aa).

5 consecutive transmembrane segments (helical) span residues 30-50 (IFIA…GSVA), 58-78 (VTIH…TAVI), 112-132 (VLIA…VIVL), 159-179 (WKTT…SFSL), and 192-212 (WAIV…SFGI).

The protein belongs to the CDP-alcohol phosphatidyltransferase class-I family.

Its subcellular location is the cell membrane. It catalyses the reaction a CDP-1,2-diacyl-sn-glycerol + sn-glycerol 3-phosphate = a 1,2-diacyl-sn-glycero-3-phospho-(1'-sn-glycero-3'-phosphate) + CMP + H(+). Its pathway is phospholipid metabolism; phosphatidylglycerol biosynthesis; phosphatidylglycerol from CDP-diacylglycerol: step 1/2. Functionally, this protein catalyzes the committed step to the synthesis of the acidic phospholipids. This is CDP-diacylglycerol--glycerol-3-phosphate 3-phosphatidyltransferase (pgsA) from Mycoplasma pneumoniae (strain ATCC 29342 / M129 / Subtype 1) (Mycoplasmoides pneumoniae).